The chain runs to 410 residues: Multifunctional CCA protein (410 aa).

ATP is bound by residues G8 and R11. The CTP site is built by G8 and R11. D21 and D23 together coordinate Mg(2+). ATP contacts are provided by R91, R137, and R140. Positions 91, 137, and 140 each coordinate CTP. Positions S225–F326 constitute an HD domain.

Belongs to the tRNA nucleotidyltransferase/poly(A) polymerase family. Bacterial CCA-adding enzyme type 1 subfamily. As to quaternary structure, monomer. Can also form homodimers and oligomers. Requires Mg(2+) as cofactor. The cofactor is Ni(2+).

The catalysed reaction is a tRNA precursor + 2 CTP + ATP = a tRNA with a 3' CCA end + 3 diphosphate. It carries out the reaction a tRNA with a 3' CCA end + 2 CTP + ATP = a tRNA with a 3' CCACCA end + 3 diphosphate. In terms of biological role, catalyzes the addition and repair of the essential 3'-terminal CCA sequence in tRNAs without using a nucleic acid template. Adds these three nucleotides in the order of C, C, and A to the tRNA nucleotide-73, using CTP and ATP as substrates and producing inorganic pyrophosphate. tRNA 3'-terminal CCA addition is required both for tRNA processing and repair. Also involved in tRNA surveillance by mediating tandem CCA addition to generate a CCACCA at the 3' terminus of unstable tRNAs. While stable tRNAs receive only 3'-terminal CCA, unstable tRNAs are marked with CCACCA and rapidly degraded. The polypeptide is Multifunctional CCA protein (Neisseria gonorrhoeae (strain NCCP11945)).